Here is a 525-residue protein sequence, read N- to C-terminus: PE-PGRS family protein PE_PGRS47 (525 aa).

The PE domain maps to 1 to 93 (MSFVIAAPEF…AYSYASAEAA (93 aa)). The disordered stretch occupies residues 506 to 525 (VGGAGGLLEGQNGENGLLPS). A compositionally biased stretch (low complexity) spans 514–525 (EGQNGENGLLPS).

It belongs to the mycobacterial PE family. PGRS subfamily.

It localises to the secreted. The protein localises to the cell surface. It is found in the host cytoplasm. The protein resides in the host cytosol. Its function is as follows. Contributes to evasion of both innate and adaptive immunity. Inhibits autophagy in infected host phagocytes and inhibits major histocompatibility complex (MHC) class II antigen presentation by mycobacteria-infected dendritic cells. Has an important role in the growth and survival of M.tuberculosis, particularly during intracellular growth and in the later chronic phase of infection. This is PE-PGRS family protein PE_PGRS47 from Mycobacterium tuberculosis (strain ATCC 25618 / H37Rv).